We begin with the raw amino-acid sequence, 240 residues long: tRNA (guanine-N(1)-)-methyltransferase (240 aa).

S-adenosyl-L-methionine is bound by residues glycine 110 and 129 to 134 (LGDFVL).

This sequence belongs to the RNA methyltransferase TrmD family. In terms of assembly, homodimer.

It is found in the cytoplasm. It catalyses the reaction guanosine(37) in tRNA + S-adenosyl-L-methionine = N(1)-methylguanosine(37) in tRNA + S-adenosyl-L-homocysteine + H(+). Functionally, specifically methylates guanosine-37 in various tRNAs. This Clostridium botulinum (strain Kyoto / Type A2) protein is tRNA (guanine-N(1)-)-methyltransferase.